The primary structure comprises 724 residues: Acyl-coenzyme A oxidase 2 (724 aa).

A disordered region spans residues 1–23 (MALISNLKDEYDHPTKTDPDTNP). Basic and acidic residues predominate over residues 7–21 (LKDEYDHPTKTDPDT).

This sequence belongs to the acyl-CoA oxidase family. FAD serves as cofactor.

The protein localises to the peroxisome. The catalysed reaction is a 2,3-saturated acyl-CoA + O2 = a (2E)-enoyl-CoA + H2O2. The protein operates within lipid metabolism; peroxisomal fatty acid beta-oxidation. This Candida maltosa (Yeast) protein is Acyl-coenzyme A oxidase 2 (POX2).